Here is a 244-residue protein sequence, read N- to C-terminus: 5-oxoprolinase subunit A (244 aa).

This sequence belongs to the LamB/PxpA family. Forms a complex composed of PxpA, PxpB and PxpC.

It catalyses the reaction 5-oxo-L-proline + ATP + 2 H2O = L-glutamate + ADP + phosphate + H(+). Its function is as follows. Catalyzes the cleavage of 5-oxoproline to form L-glutamate coupled to the hydrolysis of ATP to ADP and inorganic phosphate. The sequence is that of 5-oxoprolinase subunit A from Shigella boydii serotype 18 (strain CDC 3083-94 / BS512).